The sequence spans 214 residues: NADH-quinone oxidoreductase subunit C (214 aa).

The protein belongs to the complex I 30 kDa subunit family. NDH-1 is composed of 14 different subunits. Subunits NuoB, C, D, E, F, and G constitute the peripheral sector of the complex.

It is found in the cell inner membrane. It catalyses the reaction a quinone + NADH + 5 H(+)(in) = a quinol + NAD(+) + 4 H(+)(out). Its function is as follows. NDH-1 shuttles electrons from NADH, via FMN and iron-sulfur (Fe-S) centers, to quinones in the respiratory chain. The immediate electron acceptor for the enzyme in this species is believed to be ubiquinone. Couples the redox reaction to proton translocation (for every two electrons transferred, four hydrogen ions are translocated across the cytoplasmic membrane), and thus conserves the redox energy in a proton gradient. This chain is NADH-quinone oxidoreductase subunit C, found in Francisella tularensis subsp. holarctica (strain LVS).